Consider the following 660-residue polypeptide: V-type ATP synthase subunit I (660 aa).

A run of 7 helical transmembrane segments spans residues 312–332, 362–382, 453–473, 485–505, 520–540, 560–580, and 593–613; these read FFAFVLFFSMIVNDAGYGLLF, ILGLGCICWGTTTTSFFGMSF, FIDNILMELALFIGVVHLSLG, IGWILFMVSAYLYVPIYLGTV, GQIGYYGMFGGIGLAVVLAMI, VLSYLRIYALGLAGAMMGATF, and SIVILLGHSVNIILSIMGGVI.

This sequence belongs to the V-ATPase 116 kDa subunit family.

Its subcellular location is the cell membrane. Its function is as follows. Produces ATP from ADP in the presence of a proton gradient across the membrane. The polypeptide is V-type ATP synthase subunit I (atpI) (Chlamydia pneumoniae (Chlamydophila pneumoniae)).